The chain runs to 181 residues: Acireductone dioxygenase (181 aa).

Positions 1-10 (MRAYIYDEES) are enriched in acidic residues. The disordered stretch occupies residues 1–23 (MRAYIYDEESQLSPQDEHESSQS). Fe(2+) contacts are provided by H82, H84, E88, and H128. 4 residues coordinate Ni(2+): H82, H84, E88, and H128.

It belongs to the acireductone dioxygenase (ARD) family. Fe(2+) serves as cofactor. Ni(2+) is required as a cofactor.

It localises to the cytoplasm. It is found in the nucleus. It carries out the reaction 1,2-dihydroxy-5-(methylsulfanyl)pent-1-en-3-one + O2 = 4-methylsulfanyl-2-oxobutanoate + formate + 2 H(+). The enzyme catalyses 1,2-dihydroxy-5-(methylsulfanyl)pent-1-en-3-one + O2 = 3-(methylsulfanyl)propanoate + CO + formate + 2 H(+). Its pathway is amino-acid biosynthesis; L-methionine biosynthesis via salvage pathway; L-methionine from S-methyl-5-thio-alpha-D-ribose 1-phosphate: step 5/6. In terms of biological role, catalyzes 2 different reactions between oxygen and the acireductone 1,2-dihydroxy-3-keto-5-methylthiopentene (DHK-MTPene) depending upon the metal bound in the active site. Fe-containing acireductone dioxygenase (Fe-ARD) produces formate and 2-keto-4-methylthiobutyrate (KMTB), the alpha-ketoacid precursor of methionine in the methionine recycle pathway. Ni-containing acireductone dioxygenase (Ni-ARD) produces methylthiopropionate, carbon monoxide and formate, and does not lie on the methionine recycle pathway. The protein is Acireductone dioxygenase of Puccinia graminis f. sp. tritici (strain CRL 75-36-700-3 / race SCCL) (Black stem rust fungus).